Consider the following 601-residue polypeptide: Elongation factor 4 (601 aa).

The 183-residue stretch at 7 to 189 (KHTRNFSIVA…AIVEKVPVPD (183 aa)) folds into the tr-type G domain. Residues 19–24 (DHGKST) and 136–139 (NKID) each bind GTP.

This sequence belongs to the TRAFAC class translation factor GTPase superfamily. Classic translation factor GTPase family. LepA subfamily.

The protein resides in the cell membrane. It catalyses the reaction GTP + H2O = GDP + phosphate + H(+). Functionally, required for accurate and efficient protein synthesis under certain stress conditions. May act as a fidelity factor of the translation reaction, by catalyzing a one-codon backward translocation of tRNAs on improperly translocated ribosomes. Back-translocation proceeds from a post-translocation (POST) complex to a pre-translocation (PRE) complex, thus giving elongation factor G a second chance to translocate the tRNAs correctly. Binds to ribosomes in a GTP-dependent manner. This is Elongation factor 4 from Clostridium novyi (strain NT).